The primary structure comprises 282 residues: Cyanocobalamin reductase / alkylcobalamin dealkylase (282 aa).

Substrate contacts are provided by residues D104, 115 to 118, 129 to 131, C149, and I160; these read ILAQ and YYQ. A disordered region spans residues 234–282; it reads LGLAQPSEKPSSPSPDLPFTTPAPKKPGNPSRARSWLSPRVSPPASPGP. Residues S245, S247, S275, and S279 each carry the phosphoserine modification.

This sequence belongs to the MMACHC family. In terms of assembly, monomer in the absence of bound substrate. Homodimer; dimerization is triggered by binding to FMN or adenosylcobalamin. Interacts with LMBRD1 and ABCD4; the interaction ensures the transport of cobalamin from the lysosome to the cytoplasm. Forms a multiprotein complex with MMADHC, MTR and MTRR; the interaction with MTR could modulate MMACHC-dependent processing of cobalamin. Heterodimer with MMADHC; the interaction might play a role in the regulation of the balance between AdoCbl and MeCbl synthesis. Requires FAD as cofactor. It depends on FMN as a cofactor. As to expression, widely expressed. Expressed at higher level in fetal liver. Also expressed in spleen, lymph node, thymus and bone marrow. Weakly or not expressed in peripheral blood leukocytes.

It localises to the cytoplasm. It is found in the cytosol. The enzyme catalyses 2 cob(II)alamin-[cyanocobalamin reductase] + 2 hydrogen cyanide + NADP(+) = 2 cyanocob(III)alamin + 2 apo-[cyanocobalamin reductase] + NADPH + H(+). The catalysed reaction is apo-[alkylcobalamin reductase] + an R-cob(III)alamin + glutathione = cob(I)alamin-[alkylcobalamin reductase] + an S-substituted glutathione + H(+). It carries out the reaction apo-[alkylcobalamin reductase] + methylcob(III)alamin + glutathione = S-methyl glutathione + cob(I)alamin-[alkylcobalamin reductase] + H(+). It catalyses the reaction apo-[alkylcobalamin reductase] + adenosylcob(III)alamin + glutathione = S-adenosylglutathione + cob(I)alamin-[alkylcobalamin reductase] + H(+). Cobalamin (vitamin B12) cytosolic chaperone that catalyzes the reductive decyanation of cyanocob(III)alamin (cyanocobalamin, CNCbl) to yield cob(II)alamin and cyanide, using FAD or FMN as cofactors and NADPH as cosubstrate. Cyanocobalamin constitutes the inactive form of vitamin B12 introduced from the diet, and is converted into the active cofactors methylcobalamin (MeCbl) involved in methionine biosynthesis, and 5'-deoxyadenosylcobalamin (AdoCbl) involved in the TCA cycle. Forms a complex with the lysosomal transporter ABCD4 and its chaperone LMBRD1, to transport cobalamin across the lysosomal membrane into the cytosol. The processing of cobalamin in the cytosol occurs in a multiprotein complex composed of at least MMACHC, MMADHC, MTRR (methionine synthase reductase) and MTR (methionine synthase) which may contribute to shuttle safely and efficiently cobalamin towards MTR in order to produce methionine. Also acts as a glutathione transferase by catalyzing the dealkylation of the alkylcob(III)alamins MeCbl and AdoCbl, using the thiolate of glutathione for nucleophilic displacement to generate cob(I)alamin and the corresponding glutathione thioether. The conversion of incoming MeCbl or AdoCbl into a common intermediate cob(I)alamin is necessary to meet the cellular needs for both cofactors. Cysteine and homocysteine cannot substitute for glutathione in this reaction. In Homo sapiens (Human), this protein is Cyanocobalamin reductase / alkylcobalamin dealkylase.